Consider the following 455-residue polypeptide: Bifunctional protein GlmU (455 aa).

The pyrophosphorylase stretch occupies residues 1–227; that stretch reads MKLKAIILAA…YEEIMAVNSR (227 aa). Residues 8-11, Lys22, Gln72, and 77-78 each bind UDP-N-acetyl-alpha-D-glucosamine; these read LAAG and GT. Asp100 is a Mg(2+) binding site. 4 residues coordinate UDP-N-acetyl-alpha-D-glucosamine: Gly137, Glu152, Asn167, and Asn225. Asn225 lines the Mg(2+) pocket. A linker region spans residues 228 to 248; sequence EQLADVEAIMRRRIAKKHMAN. Residues 249-455 form an N-acetyltransferase region; the sequence is GVTIMNPEHV…WTKRKGLLKK (207 aa). 2 residues coordinate UDP-N-acetyl-alpha-D-glucosamine: Arg330 and Lys348. His360 acts as the Proton acceptor in catalysis. Tyr363 and Asn374 together coordinate UDP-N-acetyl-alpha-D-glucosamine. Acetyl-CoA contacts are provided by residues 383–384, Ser402, Cys420, and Arg437; that span reads NY.

It in the N-terminal section; belongs to the N-acetylglucosamine-1-phosphate uridyltransferase family. The protein in the C-terminal section; belongs to the transferase hexapeptide repeat family. In terms of assembly, homotrimer. It depends on Mg(2+) as a cofactor.

The protein resides in the cytoplasm. It carries out the reaction alpha-D-glucosamine 1-phosphate + acetyl-CoA = N-acetyl-alpha-D-glucosamine 1-phosphate + CoA + H(+). The catalysed reaction is N-acetyl-alpha-D-glucosamine 1-phosphate + UTP + H(+) = UDP-N-acetyl-alpha-D-glucosamine + diphosphate. It participates in nucleotide-sugar biosynthesis; UDP-N-acetyl-alpha-D-glucosamine biosynthesis; N-acetyl-alpha-D-glucosamine 1-phosphate from alpha-D-glucosamine 6-phosphate (route II): step 2/2. Its pathway is nucleotide-sugar biosynthesis; UDP-N-acetyl-alpha-D-glucosamine biosynthesis; UDP-N-acetyl-alpha-D-glucosamine from N-acetyl-alpha-D-glucosamine 1-phosphate: step 1/1. It functions in the pathway bacterial outer membrane biogenesis; LPS lipid A biosynthesis. Functionally, catalyzes the last two sequential reactions in the de novo biosynthetic pathway for UDP-N-acetylglucosamine (UDP-GlcNAc). The C-terminal domain catalyzes the transfer of acetyl group from acetyl coenzyme A to glucosamine-1-phosphate (GlcN-1-P) to produce N-acetylglucosamine-1-phosphate (GlcNAc-1-P), which is converted into UDP-GlcNAc by the transfer of uridine 5-monophosphate (from uridine 5-triphosphate), a reaction catalyzed by the N-terminal domain. In Alkaliphilus oremlandii (strain OhILAs) (Clostridium oremlandii (strain OhILAs)), this protein is Bifunctional protein GlmU.